Consider the following 372-residue polypeptide: Probable NADH-dependent flavin oxidoreductase YqiG (372 aa).

Belongs to the NADH:flavin oxidoreductase/NADH oxidase family.

This is Probable NADH-dependent flavin oxidoreductase YqiG (yqiG) from Bacillus subtilis (strain 168).